The primary structure comprises 297 residues: SH2 domain-containing protein 6 (297 aa).

Disordered stretches follow at residues 1–61 (MSCP…FPTR) and 74–93 (MNPQ…RGTS). The span at 36 to 45 (PSKPPLPPPQ) shows a compositional bias: pro residues. Residues 187-295 (WYSGNCDRQS…RGLTYLRFPT (109 aa)) enclose the SH2 domain.

This chain is SH2 domain-containing protein 6 (Sh2d6), found in Mus musculus (Mouse).